The primary structure comprises 310 residues: p-hydroxybenzoic acid efflux pump subunit AaeA (310 aa).

The chain crosses the membrane as a helical span at residues 12–32 (AITLVLVILAFIAIFRAWVYY).

Belongs to the membrane fusion protein (MFP) (TC 8.A.1) family.

Its subcellular location is the cell inner membrane. Functionally, forms an efflux pump with AaeB. The protein is p-hydroxybenzoic acid efflux pump subunit AaeA of Escherichia fergusonii (strain ATCC 35469 / DSM 13698 / CCUG 18766 / IAM 14443 / JCM 21226 / LMG 7866 / NBRC 102419 / NCTC 12128 / CDC 0568-73).